Consider the following 513-residue polypeptide: ATP synthase subunit alpha (513 aa).

169–176 provides a ligand contact to ATP; sequence GDRQTGKT.

The protein belongs to the ATPase alpha/beta chains family. F-type ATPases have 2 components, CF(1) - the catalytic core - and CF(0) - the membrane proton channel. CF(1) has five subunits: alpha(3), beta(3), gamma(1), delta(1), epsilon(1). CF(0) has three main subunits: a(1), b(2) and c(9-12). The alpha and beta chains form an alternating ring which encloses part of the gamma chain. CF(1) is attached to CF(0) by a central stalk formed by the gamma and epsilon chains, while a peripheral stalk is formed by the delta and b chains.

Its subcellular location is the cell inner membrane. The enzyme catalyses ATP + H2O + 4 H(+)(in) = ADP + phosphate + 5 H(+)(out). Produces ATP from ADP in the presence of a proton gradient across the membrane. The alpha chain is a regulatory subunit. The sequence is that of ATP synthase subunit alpha from Citrobacter koseri (strain ATCC BAA-895 / CDC 4225-83 / SGSC4696).